A 165-amino-acid polypeptide reads, in one-letter code: Endoribonuclease YbeY (165 aa).

Zn(2+)-binding residues include histidine 130, histidine 134, and histidine 140.

It belongs to the endoribonuclease YbeY family. Requires Zn(2+) as cofactor.

The protein resides in the cytoplasm. Functionally, single strand-specific metallo-endoribonuclease involved in late-stage 70S ribosome quality control and in maturation of the 3' terminus of the 16S rRNA. The polypeptide is Endoribonuclease YbeY (Streptococcus suis (strain 98HAH33)).